Consider the following 95-residue polypeptide: Large ribosomal subunit protein bL25 (95 aa).

It belongs to the bacterial ribosomal protein bL25 family. In terms of assembly, part of the 50S ribosomal subunit; part of the 5S rRNA/L5/L18/L25 subcomplex. Contacts the 5S rRNA. Binds to the 5S rRNA independently of L5 and L18.

In terms of biological role, this is one of the proteins that binds to the 5S RNA in the ribosome where it forms part of the central protuberance. The chain is Large ribosomal subunit protein bL25 from Yersinia enterocolitica serotype O:8 / biotype 1B (strain NCTC 13174 / 8081).